The primary structure comprises 411 residues: Creatinase (411 aa).

His-240 is an active-site residue.

The protein belongs to the peptidase M24 family. Creatinase subfamily. Homodimer.

It catalyses the reaction creatine + H2O = sarcosine + urea. The sequence is that of Creatinase from Bacillus sp. (strain B-0618).